Reading from the N-terminus, the 324-residue chain is 4-hydroxybenzoyl-CoA reductase subunit beta (324 aa).

In terms of domain architecture, FAD-binding PCMH-type spans 2 to 217 (NILTDFRTHR…AAIEVPPTGA (216 aa)). FAD-binding positions include 29 to 36 (PLGAGTDL), Thr111, Asn115, and Gln118. [4Fe-4S] cluster contacts are provided by Cys122, Cys138, Cys146, and Cys155. Residues Asp162 and Lys224 each coordinate FAD.

As to quaternary structure, heterohexamer of two alpha, two beta and two gamma subunits. Requires FAD as cofactor. [4Fe-4S] cluster serves as cofactor.

The catalysed reaction is oxidized 2[4Fe-4S]-[ferredoxin] + benzoyl-CoA + H2O = 4-hydroxybenzoyl-CoA + reduced 2[4Fe-4S]-[ferredoxin] + 2 H(+). Inactivated by low concentrations of cyanide in vitro. Functionally, component of a complex that catalyzes the reductive dehydroxylation of 4-hydroxybenzoyl-CoA to benzoyl-CoA. Reaction is not reversible. Is a key enzyme in the anaerobic degradation of phenolic compounds. This Thauera aromatica protein is 4-hydroxybenzoyl-CoA reductase subunit beta (hcrB).